The chain runs to 1485 residues: Chromosome partition protein MukB (1485 aa).

Residue 34–41 participates in ATP binding; sequence GGNGAGKS. Coiled-coil stretches lie at residues 337-480 and 509-605; these read LNLV…QAYQ and QHLA…PVWL. Positions 666–783 are flexible hinge; sequence PSGAEDARLI…EVPLFGRAAR (118 aa). Coiled coils occupy residues 835–915 and 977–1116; these read EAEI…IQQH and GMLT…AKAG.

This sequence belongs to the SMC family. MukB subfamily. In terms of assembly, homodimerization via its hinge domain. Binds to DNA via its C-terminal region. Interacts, and probably forms a ternary complex, with MukE and MukF via its C-terminal region. The complex formation is stimulated by calcium or magnesium. Interacts with tubulin-related protein FtsZ.

The protein localises to the cytoplasm. Its subcellular location is the nucleoid. Plays a central role in chromosome condensation, segregation and cell cycle progression. Functions as a homodimer, which is essential for chromosome partition. Involved in negative DNA supercoiling in vivo, and by this means organize and compact chromosomes. May achieve or facilitate chromosome segregation by condensation DNA from both sides of a centrally located replisome during cell division. The protein is Chromosome partition protein MukB of Yersinia pseudotuberculosis serotype O:3 (strain YPIII).